Here is a 350-residue protein sequence, read N- to C-terminus: MEVRHNWTVVEVKALMDKPFMDLVFEAQLVHRQYQEANYVQVSTLLSIKTGACPEDCKYCPQSAHYRTDVDRERLMEVESVLDAAKKAKDSGSTRFCMGAAWKNPKERDMPYLLDMIKGVKDIGLETCMTLGMITSDQAGELSGAGLDYYNHNLDTSPEFYGNIITTRTYQDRLDTLSHVRDAGMKICSGGIIGMGESVNDRAGLFVELANLPQHPESVPVNMLVKVKGTPLEDAEDVDPFDFIRLIAVARIMMPESAVRLSAGRESMNEQMQALCFMAGTNSVFYGCKLLTTPNPDEDSDMQLFKKLGVNSHQVAQKPDEVQEHELLDRVAERVASRPDKNDLFYEASV.

The Radical SAM core domain maps to 38 to 256 (NYVQVSTLLS…IAVARIMMPE (219 aa)). Residues cysteine 53, cysteine 57, and cysteine 60 each contribute to the [4Fe-4S] cluster site. [2Fe-2S] cluster is bound by residues cysteine 97, cysteine 128, cysteine 188, and arginine 260.

This sequence belongs to the radical SAM superfamily. Biotin synthase family. As to quaternary structure, homodimer. [4Fe-4S] cluster serves as cofactor. It depends on [2Fe-2S] cluster as a cofactor.

It carries out the reaction (4R,5S)-dethiobiotin + (sulfur carrier)-SH + 2 reduced [2Fe-2S]-[ferredoxin] + 2 S-adenosyl-L-methionine = (sulfur carrier)-H + biotin + 2 5'-deoxyadenosine + 2 L-methionine + 2 oxidized [2Fe-2S]-[ferredoxin]. The protein operates within cofactor biosynthesis; biotin biosynthesis; biotin from 7,8-diaminononanoate: step 2/2. Functionally, catalyzes the conversion of dethiobiotin (DTB) to biotin by the insertion of a sulfur atom into dethiobiotin via a radical-based mechanism. This chain is Biotin synthase, found in Aliivibrio salmonicida (strain LFI1238) (Vibrio salmonicida (strain LFI1238)).